The chain runs to 463 residues: L-seryl-tRNA(Sec) selenium transferase (463 aa).

Lys-295 carries the post-translational modification N6-(pyridoxal phosphate)lysine.

The protein belongs to the SelA family. In terms of assembly, homodecamer; pentamer of dimers. Binds only one seryl-tRNA(Sec) per dimer. Pyridoxal 5'-phosphate is required as a cofactor.

The protein resides in the cytoplasm. It catalyses the reaction L-seryl-tRNA(Sec) + selenophosphate + H(+) = L-selenocysteinyl-tRNA(Sec) + phosphate. It participates in aminoacyl-tRNA biosynthesis; selenocysteinyl-tRNA(Sec) biosynthesis; selenocysteinyl-tRNA(Sec) from L-seryl-tRNA(Sec) (bacterial route): step 1/1. Converts seryl-tRNA(Sec) to selenocysteinyl-tRNA(Sec) required for selenoprotein biosynthesis. This is L-seryl-tRNA(Sec) selenium transferase from Photorhabdus laumondii subsp. laumondii (strain DSM 15139 / CIP 105565 / TT01) (Photorhabdus luminescens subsp. laumondii).